Here is a 184-residue protein sequence, read N- to C-terminus: ATP synthase subunit b, chloroplastic (184 aa).

Residues 27–49 (LATNPINLSVVFGVLIFFGKGVL) form a helical membrane-spanning segment.

Belongs to the ATPase B chain family. F-type ATPases have 2 components, F(1) - the catalytic core - and F(0) - the membrane proton channel. F(1) has five subunits: alpha(3), beta(3), gamma(1), delta(1), epsilon(1). F(0) has four main subunits: a(1), b(1), b'(1) and c(10-14). The alpha and beta chains form an alternating ring which encloses part of the gamma chain. F(1) is attached to F(0) by a central stalk formed by the gamma and epsilon chains, while a peripheral stalk is formed by the delta, b and b' chains.

Its subcellular location is the plastid. The protein resides in the chloroplast thylakoid membrane. In terms of biological role, f(1)F(0) ATP synthase produces ATP from ADP in the presence of a proton or sodium gradient. F-type ATPases consist of two structural domains, F(1) containing the extramembraneous catalytic core and F(0) containing the membrane proton channel, linked together by a central stalk and a peripheral stalk. During catalysis, ATP synthesis in the catalytic domain of F(1) is coupled via a rotary mechanism of the central stalk subunits to proton translocation. Its function is as follows. Component of the F(0) channel, it forms part of the peripheral stalk, linking F(1) to F(0). The polypeptide is ATP synthase subunit b, chloroplastic (Arabis hirsuta (Hairy rock-cress)).